The chain runs to 366 residues: Eukaryotic translation initiation factor 3 subunit H (366 aa).

In terms of domain architecture, MPN spans 12–161 (VKVEALVVMK…LRAFRLSPKF (150 aa)).

This sequence belongs to the eIF-3 subunit H family. Component of the eukaryotic translation initiation factor 3 (eIF-3) complex.

It is found in the cytoplasm. Component of the eukaryotic translation initiation factor 3 (eIF-3) complex, which is involved in protein synthesis of a specialized repertoire of mRNAs and, together with other initiation factors, stimulates binding of mRNA and methionyl-tRNAi to the 40S ribosome. The eIF-3 complex specifically targets and initiates translation of a subset of mRNAs involved in cell proliferation. This chain is Eukaryotic translation initiation factor 3 subunit H, found in Emericella nidulans (strain FGSC A4 / ATCC 38163 / CBS 112.46 / NRRL 194 / M139) (Aspergillus nidulans).